Consider the following 183-residue polypeptide: Small ribosomal subunit protein uS4c (183 aa).

Residues 82–143 form the S4 RNA-binding domain; the sequence is MRLDNILFRL…KQRSKALIQN (62 aa).

The protein belongs to the universal ribosomal protein uS4 family. Part of the 30S ribosomal subunit. Contacts protein S5. The interaction surface between S4 and S5 is involved in control of translational fidelity.

The protein resides in the plastid. The protein localises to the chloroplast. Functionally, one of the primary rRNA binding proteins, it binds directly to 16S rRNA where it nucleates assembly of the body of the 30S subunit. With S5 and S12 plays an important role in translational accuracy. The sequence is that of Small ribosomal subunit protein uS4c (rps4) from Freesia sp. (strain Lejeune 1997).